We begin with the raw amino-acid sequence, 1133 residues long: Trafficking protein particle complex subunit 11 (1133 aa).

N6-acetyllysine is present on Lys245.

The protein belongs to the TRAPPC11 family. As to quaternary structure, component of the multisubunit TRAPP (transport protein particle) complex, which includes at least TRAPPC2, TRAPPC2L, TRAPPC3, TRAPPC3L, TRAPPC4, TRAPPC5, TRAPPC8, TRAPPC9, TRAPPC10, TRAPPC11 and TRAPPC12.

The protein resides in the golgi apparatus. Its subcellular location is the cis-Golgi network. Involved in endoplasmic reticulum to Golgi apparatus trafficking at a very early stage. The chain is Trafficking protein particle complex subunit 11 (TRAPPC11) from Bos taurus (Bovine).